Here is a 1642-residue protein sequence, read N- to C-terminus: Cholesterol transporter ABCA5 (1642 aa).

The chain crosses the membrane as a helical span at residues 32–52; sequence SVQEILFPLFFLFWLILVSMM. N-linked (GlcNAc...) asparagine glycosylation occurs at Asn86. Helical transmembrane passes span 220-240, 264-284, 297-317, 328-348, and 355-375; these read VILI…AIHI, LSWV…MAVI, IVIF…ALML, GVVE…IVLI, and LVWL…AQVM. N-linked (GlcNAc...) asparagine glycosylation is present at Asn388. A helical transmembrane segment spans residues 396-416; it reads LIITIIMLALDSVFYVLLAVY. Asn458 carries N-linked (GlcNAc...) asparagine glycosylation. In terms of domain architecture, ABC transporter 1 spans 478–713; the sequence is IRISGIQKSY…WGIGYRLSMY (236 aa). 514–521 contacts ATP; it reads GHSGTGKS. A helical transmembrane segment spans residues 864–884; sequence AVLLLLLIFFAVQIFMFFLHH. Asn919 is a glycosylation site (N-linked (GlcNAc...) asparagine). The helical transmembrane segment at 967–987 threads the bilayer; that stretch reads VFSAVFNSTMVYCLPVMMNII. Asn996 is a glycosylation site (N-linked (GlcNAc...) asparagine). 6 helical membrane-spanning segments follow: residues 1021 to 1041, 1071 to 1091, 1102 to 1122, 1138 to 1158, 1164 to 1184, and 1207 to 1227; these read LYFQ…YFAM, VVDI…LFAF, FLAV…FTYI, SFIY…TFFL, AVFH…GCLI, and LLVA…LLQH. Residues 1290 to 1533 enclose the ABC transporter 2 domain; sequence IMVCNLHKEY…FGKGYFLEIK (244 aa). An ATP-binding site is contributed by 1333–1340; it reads GPNGAGKS.

It belongs to the ABC transporter superfamily. ABCA family. Post-translationally, N-glycosylated. Expressed in cardiomyocytes, oligodendrocytes and astrocytes in brain, alveolar type 2 cells in lung and follicular cells in the thyroid gland (at protein level). Detected in brain, testis, lung, heart, liver, kidney, skeletal muscle and placenta. Strongly expressed in the basal cells of the seminiferous tubules, interstitial cells consisting of Leydig cells, as well as the tunica albuginea. In the epididymis, specifically and very strongly expressed in the connective tissue outlining the cylindrical epithelium in the corpus and cauda regions, including fibrocytes and smooth muscle cells, as well as within the basal and tall columnar cells of the corpus cylindrical epithelium. Highly expressed in the brain with high expression in cortical and hippocampal neurons and moderately in the lung.

The protein localises to the golgi apparatus membrane. It localises to the lysosome membrane. Its subcellular location is the late endosome membrane. The protein resides in the cell membrane. It carries out the reaction cholesterol(in) + ATP + H2O = cholesterol(out) + ADP + phosphate + H(+). Cholesterol efflux transporter in macrophages that is responsible for APOAI/high-density lipoproteins (HDL) formation at the plasma membrane under high cholesterol levels and participates in reverse cholesterol transport. May play a role in the processing of autolysosomes. The sequence is that of Cholesterol transporter ABCA5 from Mus musculus (Mouse).